Consider the following 247-residue polypeptide: Calpain small subunit 2 (247 aa).

The Ca(2+) site is built by Ala-88, Asp-91, Glu-93, Asp-131, Asp-133, Thr-135, Lys-137, Glu-142, Asp-161, Asp-163, Ser-165, and Asp-204. EF-hand domains are found at residues 118-151 (FSLD…NNIK), 148-183 (NNIK…AGFQ), 184-212 (LNEQ…ISCL), and 213-247 (VRLD…TMYS).

In terms of assembly, heterodimer of a large (catalytic) and a small (regulatory) subunit.

The protein resides in the cytoplasm. It is found in the cell membrane. In terms of biological role, calcium-regulated non-lysosomal thiol-protease which catalyzes limited proteolysis of substrates involved in cytoskeletal remodeling and signal transduction. This small subunit may act as a tissue-specific chaperone of the large subunit, possibly by helping it fold into its correct conformation for activity. This chain is Calpain small subunit 2 (Capns2), found in Mus musculus (Mouse).